Consider the following 568-residue polypeptide: Glucose-6-phosphate isomerase, cytosolic 1 (568 aa).

Glu360 serves as the catalytic Proton donor. Catalysis depends on residues His391 and Lys516.

This sequence belongs to the GPI family. As to quaternary structure, homodimer.

The protein localises to the cytoplasm. It catalyses the reaction alpha-D-glucose 6-phosphate = beta-D-fructose 6-phosphate. Its pathway is carbohydrate degradation; glycolysis; D-glyceraldehyde 3-phosphate and glycerone phosphate from D-glucose: step 2/4. The protein is Glucose-6-phosphate isomerase, cytosolic 1 (PGIC1) of Clarkia arcuata (Glandular clarkia).